The primary structure comprises 369 residues: Probable dual-specificity RNA methyltransferase RlmN (369 aa).

Glutamate 108 serves as the catalytic Proton acceptor. One can recognise a Radical SAM core domain in the interval 114 to 357 (YPDRATVCIS…CTVRDTRGQE (244 aa)). A disulfide bridge connects residues cysteine 121 and cysteine 362. [4Fe-4S] cluster-binding residues include cysteine 128, cysteine 132, and cysteine 135. Residues 183–184 (GE), serine 217, 240–242 (SLH), and asparagine 319 each bind S-adenosyl-L-methionine. The S-methylcysteine intermediate role is filled by cysteine 362.

The protein belongs to the radical SAM superfamily. RlmN family. It depends on [4Fe-4S] cluster as a cofactor.

It is found in the cytoplasm. It catalyses the reaction adenosine(2503) in 23S rRNA + 2 reduced [2Fe-2S]-[ferredoxin] + 2 S-adenosyl-L-methionine = 2-methyladenosine(2503) in 23S rRNA + 5'-deoxyadenosine + L-methionine + 2 oxidized [2Fe-2S]-[ferredoxin] + S-adenosyl-L-homocysteine. The catalysed reaction is adenosine(37) in tRNA + 2 reduced [2Fe-2S]-[ferredoxin] + 2 S-adenosyl-L-methionine = 2-methyladenosine(37) in tRNA + 5'-deoxyadenosine + L-methionine + 2 oxidized [2Fe-2S]-[ferredoxin] + S-adenosyl-L-homocysteine. Functionally, specifically methylates position 2 of adenine 2503 in 23S rRNA and position 2 of adenine 37 in tRNAs. This Saccharopolyspora erythraea (strain ATCC 11635 / DSM 40517 / JCM 4748 / NBRC 13426 / NCIMB 8594 / NRRL 2338) protein is Probable dual-specificity RNA methyltransferase RlmN.